Consider the following 272-residue polypeptide: Shikimate dehydrogenase (NADP(+)) (272 aa).

Residues serine 14–serine 16 and threonine 61 each bind shikimate. Catalysis depends on lysine 65, which acts as the Proton acceptor. Glutamate 77 lines the NADP(+) pocket. Asparagine 86 and aspartate 102 together coordinate shikimate. Residues glycine 126–alanine 130, asparagine 149–arginine 154, and methionine 213 contribute to the NADP(+) site. Tyrosine 215 is a shikimate binding site. Glycine 237 contacts NADP(+).

It belongs to the shikimate dehydrogenase family. In terms of assembly, homodimer.

The catalysed reaction is shikimate + NADP(+) = 3-dehydroshikimate + NADPH + H(+). The protein operates within metabolic intermediate biosynthesis; chorismate biosynthesis; chorismate from D-erythrose 4-phosphate and phosphoenolpyruvate: step 4/7. Its function is as follows. Involved in the biosynthesis of the chorismate, which leads to the biosynthesis of aromatic amino acids. Catalyzes the reversible NADPH linked reduction of 3-dehydroshikimate (DHSA) to yield shikimate (SA). The protein is Shikimate dehydrogenase (NADP(+)) of Shigella boydii serotype 4 (strain Sb227).